Reading from the N-terminus, the 313-residue chain is Small ribosomal subunit protein uS2 (313 aa).

The span at 234 to 243 (DEEAKEEKTK) shows a compositional bias: basic and acidic residues. The interval 234 to 313 (DEEAKEEKTK…ASKAEAEEGK (80 aa)) is disordered. Residues 244-256 (AKTTAKKVVTKKA) show a composition bias toward basic residues. The segment covering 266 to 297 (AEKKSEKPTTEKRPTKEAAETKETSEEPKTKE) has biased composition (basic and acidic residues).

Belongs to the universal ribosomal protein uS2 family.

This is Small ribosomal subunit protein uS2 from Coxiella burnetii (strain Dugway 5J108-111).